We begin with the raw amino-acid sequence, 289 residues long: 4-hydroxy-tetrahydrodipicolinate synthase (289 aa).

Residue T43 coordinates pyruvate. Y131 acts as the Proton donor/acceptor in catalysis. The Schiff-base intermediate with substrate role is filled by K160. V200 contacts pyruvate.

Belongs to the DapA family. As to quaternary structure, homotetramer; dimer of dimers.

It localises to the cytoplasm. It carries out the reaction L-aspartate 4-semialdehyde + pyruvate = (2S,4S)-4-hydroxy-2,3,4,5-tetrahydrodipicolinate + H2O + H(+). It functions in the pathway amino-acid biosynthesis; L-lysine biosynthesis via DAP pathway; (S)-tetrahydrodipicolinate from L-aspartate: step 3/4. Functionally, catalyzes the condensation of (S)-aspartate-beta-semialdehyde [(S)-ASA] and pyruvate to 4-hydroxy-tetrahydrodipicolinate (HTPA). The chain is 4-hydroxy-tetrahydrodipicolinate synthase from Methanococcus maripaludis (strain C5 / ATCC BAA-1333).